Consider the following 358-residue polypeptide: Methylthioribose-1-phosphate isomerase (358 aa).

Residues 54 to 56, arginine 96, and glutamine 205 contribute to the substrate site; that span reads RGA. The active-site Proton donor is aspartate 246. 256–257 is a substrate binding site; sequence SK.

This sequence belongs to the eIF-2B alpha/beta/delta subunits family. MtnA subfamily.

The catalysed reaction is 5-(methylsulfanyl)-alpha-D-ribose 1-phosphate = 5-(methylsulfanyl)-D-ribulose 1-phosphate. Its pathway is amino-acid biosynthesis; L-methionine biosynthesis via salvage pathway; L-methionine from S-methyl-5-thio-alpha-D-ribose 1-phosphate: step 1/6. Its function is as follows. Catalyzes the interconversion of methylthioribose-1-phosphate (MTR-1-P) into methylthioribulose-1-phosphate (MTRu-1-P). In Pseudomonas putida (strain GB-1), this protein is Methylthioribose-1-phosphate isomerase.